A 1564-amino-acid chain; its full sequence is ATP-dependent permease PDR10 (1564 aa).

The segment covering 1–16 has biased composition (polar residues); sequence MLQAPSSSNSGLNQGN. The disordered stretch occupies residues 1–37; it reads MLQAPSSSNSGLNQGNAAPDGPPNETQPYEGLDAAAQ. Topologically, residues 1-587 are cytoplasmic; the sequence is MLQAPSSSNS…AAIFFAILFN (587 aa). Residues 174 to 430 enclose the ABC transporter 1 domain; that stretch reads ISRRLFHRTH…FQRMGYVCPE (257 aa). A run of 5 helical transmembrane segments spans residues 588 to 608, 624 to 644, 674 to 694, 699 to 719, and 732 to 752; these read AFSS…TEKH, TFSD…PYYF, RCIG…SVLL, MYTG…WISY, and INEF…GPNY. Asn754 carries an N-linked (GlcNAc...) asparagine glycan. A compositionally biased stretch (basic residues) spans 839–849; sequence KGIVSEKKKKN. The disordered stretch occupies residues 839-872; that stretch reads KGIVSEKKKKNQPTLSTSDAEKDVEMNNNSSATD. A helical membrane pass occupies residues 841 to 861; that stretch reads IVSEKKKKNQPTLSTSDAEKD. At 862–1304 the chain is on the cytoplasmic side; that stretch reads VEMNNNSSAT…IFMFTVVFNP (443 aa). Residues 923 to 1166 enclose the ABC transporter 2 domain; it reads FHWKNLCYDI…MINYFEAHGA (244 aa). Residue 959–966 participates in ATP binding; it reads GASGAGKT. The next 6 membrane-spanning stretches (helical) occupy residues 1305–1325, 1340–1360, 1390–1410, 1426–1446, 1459–1479, and 1491–1511; these read ILQQ…ARER, ILVE…VYYY, VYIS…ENAA, VLAT…VSPL, ANAS…PSGM, and STGT…FCQF. Residues 1512-1564 lie on the Cytoplasmic side of the membrane; sequence SSTNDYLATVSSSYSRRWMNYGIFSAYIVFDYCAAIFLYWLVRVPKKSKKLKK.

Belongs to the ABC transporter superfamily. ABCG family. PDR (TC 3.A.1.205) subfamily.

It is found in the membrane. The sequence is that of ATP-dependent permease PDR10 (PDR10) from Saccharomyces cerevisiae (strain ATCC 204508 / S288c) (Baker's yeast).